We begin with the raw amino-acid sequence, 490 residues long: Protein nucleotidyltransferase YdiU (490 aa).

Positions 94, 96, 97, 117, 129, 130, 180, and 187 each coordinate ATP. Catalysis depends on Asp256, which acts as the Proton acceptor. 2 residues coordinate Mg(2+): Asn257 and Asp266. Asp266 lines the ATP pocket.

This sequence belongs to the SELO family. Requires Mg(2+) as cofactor. The cofactor is Mn(2+).

It catalyses the reaction L-seryl-[protein] + ATP = 3-O-(5'-adenylyl)-L-seryl-[protein] + diphosphate. The enzyme catalyses L-threonyl-[protein] + ATP = 3-O-(5'-adenylyl)-L-threonyl-[protein] + diphosphate. The catalysed reaction is L-tyrosyl-[protein] + ATP = O-(5'-adenylyl)-L-tyrosyl-[protein] + diphosphate. It carries out the reaction L-histidyl-[protein] + UTP = N(tele)-(5'-uridylyl)-L-histidyl-[protein] + diphosphate. It catalyses the reaction L-seryl-[protein] + UTP = O-(5'-uridylyl)-L-seryl-[protein] + diphosphate. The enzyme catalyses L-tyrosyl-[protein] + UTP = O-(5'-uridylyl)-L-tyrosyl-[protein] + diphosphate. Nucleotidyltransferase involved in the post-translational modification of proteins. It can catalyze the addition of adenosine monophosphate (AMP) or uridine monophosphate (UMP) to a protein, resulting in modifications known as AMPylation and UMPylation. The chain is Protein nucleotidyltransferase YdiU from Clostridium perfringens (strain ATCC 13124 / DSM 756 / JCM 1290 / NCIMB 6125 / NCTC 8237 / Type A).